A 650-amino-acid chain; its full sequence is DNA gyrase subunit B (650 aa).

In terms of domain architecture, Toprim spans 429–543; it reads NELFIVEGDS…AGYVYIAQPP (115 aa). Positions 435, 508, and 510 each coordinate Mg(2+).

Belongs to the type II topoisomerase GyrB family. As to quaternary structure, heterotetramer, composed of two GyrA and two GyrB chains. In the heterotetramer, GyrA contains the active site tyrosine that forms a transient covalent intermediate with DNA, while GyrB binds cofactors and catalyzes ATP hydrolysis. Mg(2+) serves as cofactor. The cofactor is Mn(2+). Ca(2+) is required as a cofactor.

Its subcellular location is the cytoplasm. The enzyme catalyses ATP-dependent breakage, passage and rejoining of double-stranded DNA.. In terms of biological role, a type II topoisomerase that negatively supercoils closed circular double-stranded (ds) DNA in an ATP-dependent manner to modulate DNA topology and maintain chromosomes in an underwound state. Negative supercoiling favors strand separation, and DNA replication, transcription, recombination and repair, all of which involve strand separation. Also able to catalyze the interconversion of other topological isomers of dsDNA rings, including catenanes and knotted rings. Type II topoisomerases break and join 2 DNA strands simultaneously in an ATP-dependent manner. The protein is DNA gyrase subunit B of Streptococcus pyogenes serotype M1.